The sequence spans 114 residues: FK506-binding protein 1 (114 aa).

Position 2 is an N-acetylserine (Ser2). A PPIase FKBP-type domain is found at 26–114 (GDLVTIHYTG…VFDVELLKVN (89 aa)). At Ser51 the chain carries Phosphoserine.

This sequence belongs to the FKBP-type PPIase family. FKBP1 subfamily. As to quaternary structure, interacts with HOM3; the interaction is direct, plays a role in feedback inhibition of aspartokinase by threonine, and is inhibited by tacrolimus and sirolimus. Interacts with HMO1. Interacts with FAP1.

It is found in the cytoplasm. It localises to the mitochondrion. The catalysed reaction is [protein]-peptidylproline (omega=180) = [protein]-peptidylproline (omega=0). Functionally, PPIases accelerate the folding of proteins. It catalyzes the cis-trans isomerization of proline imidic peptide bonds in oligopeptides. Plays a role in feedback inhibition of the pathway synthesizing the aspartate family of amino acids by binding to aspartokinase. In Saccharomyces cerevisiae (strain ATCC 204508 / S288c) (Baker's yeast), this protein is FK506-binding protein 1 (FPR1).